We begin with the raw amino-acid sequence, 76 residues long: Kappa-actitoxin-Avd4d (76 aa).

An N-terminal signal peptide occupies residues 1 to 19 (MNKALFLCLVVLCAAVVFA). The propeptide occupies 20 to 31 (AEDLQKAKHVPF). 3 cysteine pairs are disulfide-bonded: Cys37-Cys72, Cys39-Cys65, and Cys55-Cys73.

It belongs to the sea anemone type 3 (BDS) potassium channel toxin family. As to expression, moderately expressed in the ectodermal tissue from the distal and proximal tentacles, body wall, and oral disk.

It localises to the secreted. The protein localises to the nematocyst. Functionally, blocks Kv3 voltage-gated potassium channels. Reduces blood pressure. The sequence is that of Kappa-actitoxin-Avd4d from Anemonia viridis (Snakelocks anemone).